We begin with the raw amino-acid sequence, 515 residues long: Cytochrome P450 monooxygenase ptmJ (515 aa).

The next 4 membrane-spanning stretches (helical) occupy residues 6-26 (LGPFRTFTLLTVGLLLSLFVI), 50-70 (LGVVLAEILASPEGFFHLFCV), 82-102 (VFYLDLWPILPSIMVVAEPVV), and 300-320 (VIILASVVTAGAASYCYLFLH). Residue Cys449 participates in heme binding.

It belongs to the cytochrome P450 family. Requires heme as cofactor.

It localises to the membrane. The protein operates within secondary metabolite biosynthesis. In terms of biological role, cytochrome P450 monooxygenase; part of the gene cluster that mediates the biosynthesis of the indole diterpenes penitrems. The geranylgeranyl diphosphate (GGPP) synthase ptmG catalyzes the first step in penitrem biosynthesis via conversion of farnesyl pyrophosphate and isopentyl pyrophosphate into geranylgeranyl pyrophosphate (GGPP). Condensation of indole-3-glycerol phosphate with GGPP by the prenyl transferase ptmC then forms 3-geranylgeranylindole (3-GGI). Epoxidation by the FAD-dependent monooxygenase ptmM leads to a epoxidized-GGI that is substrate of the terpene cyclase ptmB for cyclization to yield paspaline. Paspaline is subsequently converted to 13-desoxypaxilline by the cytochrome P450 monooxygenase ptmP, the latter being then converted to paxilline by the cytochrome P450 monooxygenase ptmQ. Paxilline is converted to beta-paxitriol via C-10 ketoreduction by the short-chain dehydrogenase ptmH which can be monoprenylated at the C-20 by the indole diterpene prenyltransferase ptmD. A two-step elimination (acetylation and elimination) process performed by the O-acetyltransferase ptmV and ptmI leads to the production of the prenylated form of penijanthine. The FAD-linked oxidoreductase ptmO then converts the prenylated form of penijanthine into PC-M5 which is in turn transformed into PC-M4 by the aromatic dimethylallyltransferase ptmE. Five sequential oxidative transformations performed by the cytochrome P450 monooxygenases ptmK, ptmU, ptmL, ptmN and ptmJ yield the various penitrem compounds. PtmK, ptmU and ptmM are involved in the formation of the key bicyclic ring of penitrem C via the formation of the intermediates secopenitrem D and penitrem D. PtmL catalyzes the epoxidation of penitrem D and C to yield penitrem B and F, respectively. PtmJ catalyzes the last benzylic hydroxylation to convert penitrem B to prenitrem E and penitrem F to penitrem A. The protein is Cytochrome P450 monooxygenase ptmJ of Penicillium ochrochloron.